Here is a 76-residue protein sequence, read N- to C-terminus: Acyl carrier protein (76 aa).

Residues 1–76 (MATFDEVKEV…AAVDYIGSKQ (76 aa)) enclose the Carrier domain. O-(pantetheine 4'-phosphoryl)serine is present on Ser-36.

Belongs to the acyl carrier protein (ACP) family. In terms of processing, 4'-phosphopantetheine is transferred from CoA to a specific serine of apo-ACP by AcpS. This modification is essential for activity because fatty acids are bound in thioester linkage to the sulfhydryl of the prosthetic group.

It localises to the cytoplasm. The protein operates within lipid metabolism; fatty acid biosynthesis. In terms of biological role, carrier of the growing fatty acid chain in fatty acid biosynthesis. This chain is Acyl carrier protein, found in Deinococcus geothermalis (strain DSM 11300 / CIP 105573 / AG-3a).